Here is a 234-residue protein sequence, read N- to C-terminus: Sugar fermentation stimulation protein A (234 aa).

The H-T-H motif DNA-binding region spans L201–S220.

Belongs to the SfsA family.

In terms of biological role, binds to DNA non-specifically. Could be a regulatory factor involved in maltose metabolism. The chain is Sugar fermentation stimulation protein A from Shigella sonnei (strain Ss046).